Consider the following 70-residue polypeptide: Cytochrome c oxidase subunit 8B, mitochondrial (70 aa).

The transit peptide at 1–24 (MPRLPPILRLLQAPEKYTVIPKAR) directs the protein to the mitochondrion. The Mitochondrial matrix portion of the chain corresponds to 25 to 35 (ISSKPAKSPTS). A helical membrane pass occupies residues 36–59 (AMDQAVGMSVIIAGFMVPAGWVLS). The Mitochondrial intermembrane segment spans residues 60 to 70 (HLESYKRSSAA).

It belongs to the cytochrome c oxidase VIII family. In terms of assembly, component of the cytochrome c oxidase (complex IV, CIV), a multisubunit enzyme composed of 14 subunits. The complex is composed of a catalytic core of 3 subunits MT-CO1, MT-CO2 and MT-CO3, encoded in the mitochondrial DNA, and 11 supernumerary subunits COX4I, COX5A, COX5B, COX6A, COX6B, COX6C, COX7A, COX7B, COX7C, COX8 and NDUFA4, which are encoded in the nuclear genome. The complex exists as a monomer or a dimer and forms supercomplexes (SCs) in the inner mitochondrial membrane with NADH-ubiquinone oxidoreductase (complex I, CI) and ubiquinol-cytochrome c oxidoreductase (cytochrome b-c1 complex, complex III, CIII), resulting in different assemblies (supercomplex SCI(1)III(2)IV(1) and megacomplex MCI(2)III(2)IV(2)).

Its subcellular location is the mitochondrion inner membrane. The protein operates within energy metabolism; oxidative phosphorylation. In terms of biological role, component of the cytochrome c oxidase, the last enzyme in the mitochondrial electron transport chain which drives oxidative phosphorylation. The respiratory chain contains 3 multisubunit complexes succinate dehydrogenase (complex II, CII), ubiquinol-cytochrome c oxidoreductase (cytochrome b-c1 complex, complex III, CIII) and cytochrome c oxidase (complex IV, CIV), that cooperate to transfer electrons derived from NADH and succinate to molecular oxygen, creating an electrochemical gradient over the inner membrane that drives transmembrane transport and the ATP synthase. Cytochrome c oxidase is the component of the respiratory chain that catalyzes the reduction of oxygen to water. Electrons originating from reduced cytochrome c in the intermembrane space (IMS) are transferred via the dinuclear copper A center (CU(A)) of subunit 2 and heme A of subunit 1 to the active site in subunit 1, a binuclear center (BNC) formed by heme A3 and copper B (CU(B)). The BNC reduces molecular oxygen to 2 water molecules using 4 electrons from cytochrome c in the IMS and 4 protons from the mitochondrial matrix. The protein is Cytochrome c oxidase subunit 8B, mitochondrial (Cox8b) of Rattus norvegicus (Rat).